A 73-amino-acid polypeptide reads, in one-letter code: Ocellatin-PT8 (73 aa).

Residues 1 to 22 (MAFLKKSLFLVLFLGLVSLSIC) form the signal peptide. The propeptide occupies 23 to 39 (DEEKRQDEDDDDDDDEE).

In terms of tissue distribution, expressed by the skin glands.

The protein localises to the secreted. In terms of biological role, has antibacterial activity against Gram-negative bacteria E.coli ATCC 25922 (MIC=60 uM), K.pneumoniae ATCC 700603 (MIC=240 uM) and S.choleraesuis ATCC 14028 (MIC=240 uM) and against Gram-positive bacterium S.aureus ATCC 29313 (MIC=240 uM). Shows no hemolytic activity and no cytotoxicity. In Leptodactylus pustulatus (Ceara white-lipped frog), this protein is Ocellatin-PT8.